The chain runs to 321 residues: 37 kDa cell surface protein (321 aa).

Its subcellular location is the secreted. It localises to the cell wall. The chain is 37 kDa cell surface protein (CSP37) from Candida albicans (Yeast).